We begin with the raw amino-acid sequence, 147 residues long: Hemoglobin subunit epsilon (147 aa).

The region spanning histidine 3 to histidine 147 is the Globin domain. A Phosphoserine modification is found at serine 51. 2 residues coordinate heme b: histidine 64 and histidine 93.

This sequence belongs to the globin family. As to expression, red blood cells.

In terms of biological role, hemoglobin epsilon chain is a beta-type chain found in early embryos. The polypeptide is Hemoglobin subunit epsilon (HBE1) (Oryctolagus cuniculus (Rabbit)).